Here is a 552-residue protein sequence, read N- to C-terminus: Lysine--tRNA ligase (552 aa).

The 'HIGH' region signature appears at 72 to 80; it reads PSGLPHLGT. Positions 320 to 324 match the 'KMSKS' region motif; that stretch reads KISKS. Position 323 (K323) interacts with ATP.

It belongs to the class-I aminoacyl-tRNA synthetase family.

Its subcellular location is the cytoplasm. The enzyme catalyses tRNA(Lys) + L-lysine + ATP = L-lysyl-tRNA(Lys) + AMP + diphosphate. The protein is Lysine--tRNA ligase of Caulobacter vibrioides (strain ATCC 19089 / CIP 103742 / CB 15) (Caulobacter crescentus).